The chain runs to 405 residues: Phosphoglycerate kinase (405 aa).

Substrate is bound by residues 24-26 (DFN), Arg-40, 63-66 (HLGR), Arg-122, and Arg-162. ATP-binding positions include Lys-212, Glu-331, and 361–364 (GGDS).

This sequence belongs to the phosphoglycerate kinase family. Monomer.

Its subcellular location is the cytoplasm. It carries out the reaction (2R)-3-phosphoglycerate + ATP = (2R)-3-phospho-glyceroyl phosphate + ADP. Its pathway is carbohydrate degradation; glycolysis; pyruvate from D-glyceraldehyde 3-phosphate: step 2/5. This is Phosphoglycerate kinase from Corynebacterium aurimucosum (strain ATCC 700975 / DSM 44827 / CIP 107346 / CN-1) (Corynebacterium nigricans).